We begin with the raw amino-acid sequence, 772 residues long: 1,4-alpha-glucan branching enzyme GlgB (772 aa).

Catalysis depends on D431, which acts as the Nucleophile. The active-site Proton donor is E484.

The protein belongs to the glycosyl hydrolase 13 family. GlgB subfamily. As to quaternary structure, monomer.

The enzyme catalyses Transfers a segment of a (1-&gt;4)-alpha-D-glucan chain to a primary hydroxy group in a similar glucan chain.. The protein operates within glycan biosynthesis; glycogen biosynthesis. Its function is as follows. Catalyzes the formation of the alpha-1,6-glucosidic linkages in glycogen by scission of a 1,4-alpha-linked oligosaccharide from growing alpha-1,4-glucan chains and the subsequent attachment of the oligosaccharide to the alpha-1,6 position. In Synechococcus sp. (strain RCC307), this protein is 1,4-alpha-glucan branching enzyme GlgB.